The primary structure comprises 299 residues: ATP phosphoribosyltransferase (299 aa).

The protein belongs to the ATP phosphoribosyltransferase family. Long subfamily. Equilibrium between an active dimeric form, an inactive hexameric form and higher aggregates. Interconversion between the various forms is largely reversible and is influenced by the natural substrates and inhibitors of the enzyme. Mg(2+) is required as a cofactor.

It is found in the cytoplasm. The enzyme catalyses 1-(5-phospho-beta-D-ribosyl)-ATP + diphosphate = 5-phospho-alpha-D-ribose 1-diphosphate + ATP. Its pathway is amino-acid biosynthesis; L-histidine biosynthesis; L-histidine from 5-phospho-alpha-D-ribose 1-diphosphate: step 1/9. With respect to regulation, feedback inhibited by histidine. In terms of biological role, catalyzes the condensation of ATP and 5-phosphoribose 1-diphosphate to form N'-(5'-phosphoribosyl)-ATP (PR-ATP). Has a crucial role in the pathway because the rate of histidine biosynthesis seems to be controlled primarily by regulation of HisG enzymatic activity. The sequence is that of ATP phosphoribosyltransferase from Enterobacter sp. (strain 638).